We begin with the raw amino-acid sequence, 490 residues long: Sphingomyelinase (490 aa).

The first 31 residues, 1 to 31 (MDYAKRIGQVGALAVVLGVGAAVTTHAIGSA), serve as a signal peptide directing secretion. The interval 30–49 (SAAPTDPSSSSTDSPVDACS) is disordered. The Periplasmic portion of the chain corresponds to 32–136 (APTDPSSSST…FDACDPDGNR (105 aa)). The beta stranded transmembrane segment at 137–145 (MTFAVRERG) threads the bilayer. Over 146–161 (APGGPQHGIVTVDQRT) the chain is Extracellular. Residues 162–168 (ASFIYTA) traverse the membrane as a beta stranded segment. Residues 169 to 171 (DPG) are Periplasmic-facing. A beta stranded transmembrane segment spans residues 172-182 (FVGTDTFSVNV). Topologically, residues 183-187 (SDDTS) are extracellular. The beta stranded transmembrane segment at 188–196 (LHVHGLAGY) threads the bilayer. The Periplasmic segment spans residues 197–204 (LGPFHGHD). Residues 205 to 213 (DVATVTVFV) traverse the membrane as a beta stranded segment. Residues 214-490 (GNTPTDTISG…HYVADNVAVR (277 aa)) are Extracellular-facing.

Belongs to the SpmT family.

The protein resides in the cell outer membrane. The enzyme catalyses a sphingomyelin + H2O = phosphocholine + an N-acylsphing-4-enine + H(+). Functionally, catalyzes the cleavage of sphingomyelin, a major lipid in eukaryotic cells, into ceramide and phosphocholine, which are then utilized by M.bovis as carbon, nitrogen and phosphorus sources, respectively. Thus, enables M.bovis to utilize sphingomyelin as a source of several essential nutrients for intracellular growth during infection. Furthermore, lyses erythrocytes and constitutes a hemolytic factor. The chain is Sphingomyelinase from Mycobacterium bovis (strain ATCC BAA-935 / AF2122/97).